A 101-amino-acid polypeptide reads, in one-letter code: NAD(P)H-quinone oxidoreductase subunit 4L, chloroplastic (101 aa).

The next 3 helical transmembrane spans lie at 2-22 (MFEH…YGLI), 32-52 (ICLE…SDLF), and 61-81 (IFAI…LSIL).

Belongs to the complex I subunit 4L family. NDH is composed of at least 16 different subunits, 5 of which are encoded in the nucleus.

The protein localises to the plastid. It localises to the chloroplast thylakoid membrane. It catalyses the reaction a plastoquinone + NADH + (n+1) H(+)(in) = a plastoquinol + NAD(+) + n H(+)(out). The catalysed reaction is a plastoquinone + NADPH + (n+1) H(+)(in) = a plastoquinol + NADP(+) + n H(+)(out). Its function is as follows. NDH shuttles electrons from NAD(P)H:plastoquinone, via FMN and iron-sulfur (Fe-S) centers, to quinones in the photosynthetic chain and possibly in a chloroplast respiratory chain. The immediate electron acceptor for the enzyme in this species is believed to be plastoquinone. Couples the redox reaction to proton translocation, and thus conserves the redox energy in a proton gradient. This chain is NAD(P)H-quinone oxidoreductase subunit 4L, chloroplastic, found in Oryza nivara (Indian wild rice).